A 681-amino-acid polypeptide reads, in one-letter code: Protein hook (681 aa).

The 118-residue stretch at 6-123 folds into the Calponin-homology (CH) domain; that stretch reads NEMYYSLLEW…RLLQLVLGCA (118 aa). Coiled coils occupy residues 135–439 and 482–584; these read EIMS…LKCG and QTAL…KYRK.

The protein belongs to the hook family. In terms of assembly, homodimer. Interacts with microtubules via its N-terminus.

It localises to the cytoplasm. It is found in the cytoskeleton. The protein resides in the endosome. Its subcellular location is the synapse. In terms of biological role, involved in endocytic trafficking by stabilizing organelles of the endocytic pathway. Probably acts as a cytoskeletal linker protein required to tether endosome vesicles to the cytoskeleton. Involved in modulation of endocytosis at stages required for down-regulation of membrane proteins that control synapse size. Not involved in synaptic vesicle recycling. Required in R7 cells for boss endocytosis into multivesicular bodies (MVBs). Has a role in regulating adult longevity. This is Protein hook from Drosophila ananassae (Fruit fly).